We begin with the raw amino-acid sequence, 374 residues long: uncharacterized protein (374 aa).

Residues 1–13 show a composition bias toward basic and acidic residues; it reads METKYHEYDDVQT. Disordered regions lie at residues 1–20, 91–193, and 236–374; these read METK…PSNK, SPMT…PLNQ, and KINN…SDFE. Positions 95-155 are enriched in low complexity; sequence NNNNNNNNNN…NNSSNNNNNN (61 aa). Positions 166–193 are enriched in polar residues; sequence ISSNQSSPLSIYSTPPNPSSYVSSPLNQ. Positions 242 to 262 are enriched in pro residues; the sequence is APPPPPKACAPPPPPPPPPPI. Positions 277–300 are enriched in low complexity; the sequence is NNNNNNNNNNNSSNTNDSNNTNNT.

This is an uncharacterized protein from Dictyostelium discoideum (Social amoeba).